Here is a 259-residue protein sequence, read N- to C-terminus: Probable metal transport system ATP-binding protein CPn_0348/CP_0412/CPj0348/CpB0355 (259 aa).

In terms of domain architecture, ABC transporter spans 3 to 241; sequence VKDETFWSVH…TIFQTYGCEI (239 aa). 41–48 contacts ATP; it reads GPNGAGKS.

This sequence belongs to the ABC transporter superfamily.

It localises to the cell inner membrane. Part of an ATP-driven transport system CPn0346/CPn0347/CPn0348/CPn0349 for a metal. Probably responsible for energy coupling to the transport system. In Chlamydia pneumoniae (Chlamydophila pneumoniae), this protein is Probable metal transport system ATP-binding protein CPn_0348/CP_0412/CPj0348/CpB0355.